Here is a 476-residue protein sequence, read N- to C-terminus: 2-(3-amino-3-carboxypropyl)histidine synthase subunit 2 (476 aa).

A compositionally biased stretch (polar residues) spans 1 to 15 (MTESAPSAFFTTSTP). Positions 1–24 (MTESAPSAFFTTSTPADHVHEEES) are disordered. Residues Cys102, Cys123, and Cys347 each contribute to the [4Fe-4S] cluster site. The tract at residues 451-476 (DGVSTAEDSTKMGEGRSGIAQGYSGK) is disordered.

This sequence belongs to the DPH1/DPH2 family. DPH2 subfamily. Component of the 2-(3-amino-3-carboxypropyl)histidine synthase complex composed of dph-1, dph-2, dph-3 and a NADH-dependent reductase. It depends on [4Fe-4S] cluster as a cofactor.

Its pathway is protein modification; peptidyl-diphthamide biosynthesis. Required for the first step of diphthamide biosynthesis, a post-translational modification of histidine which occurs in elongation factor 2. Dph-1 and dph-2 transfer a 3-amino-3-carboxypropyl (ACP) group from S-adenosyl-L-methionine (SAM) to a histidine residue, the reaction is assisted by a reduction system comprising dph-3 and a NADH-dependent reductase. Facilitates the reduction of the catalytic iron-sulfur cluster found in the dph-1 subunit. In Caenorhabditis elegans, this protein is 2-(3-amino-3-carboxypropyl)histidine synthase subunit 2 (dph-2).